Consider the following 928-residue polypeptide: Protein ARABIDILLO 2 (928 aa).

A Nuclear localization signal motif is present at residues 3 to 8; that stretch reads RRVRQR. In terms of domain architecture, F-box spans 37 to 83; it reads YVNWTSLPYDTVFHLFTRLNYRDRASLASTCRTWRSLGASSFLWSSL. ARM repeat units lie at residues 147-186, 237-278, 303-341, 370-409, 419-458, 460-499, 501-543, 545-585, 591-630, 632-674, 676-715, 717-757, and 824-864; these read AARH…KLRV, TSNI…KSSQ, KGKV…DLIR, SQGL…TFIV, CGRA…NLSV, AKVA…NLSV, EEHK…NLAA, DKCS…NLAA, GNNA…NLAF, DKNR…GLSV, EANS…NLSF, PGNA…YMFD, and IPEA…QFTI.

The protein belongs to the beta-catenin family. As to expression, expressed ubiquitously.

The protein resides in the nucleus. Its function is as follows. Promotes lateral root initiation and development, independently of auxin (IAA) and abscisis acid (ABA). In Arabidopsis thaliana (Mouse-ear cress), this protein is Protein ARABIDILLO 2.